Here is a 235-residue protein sequence, read N- to C-terminus: Ribitol-5-phosphate cytidylyltransferase (235 aa).

CTP-binding positions include 7 to 10 (LAGG), 82 to 88 (GADRNTS), and S113.

Belongs to the IspD/TarI cytidylyltransferase family. TarI subfamily.

The enzyme catalyses D-ribitol 5-phosphate + CTP + H(+) = CDP-L-ribitol + diphosphate. The protein operates within cell wall biogenesis; poly(ribitol phosphate) teichoic acid biosynthesis. Catalyzes the transfer of the cytidylyl group of CTP to D-ribitol 5-phosphate. In Streptococcus pneumoniae serotype 2 (strain D39 / NCTC 7466), this protein is Ribitol-5-phosphate cytidylyltransferase.